We begin with the raw amino-acid sequence, 717 residues long: Delta-1-pyrroline-5-carboxylate synthase A (717 aa).

Residues 1–296 form a glutamate 5-kinase region; that stretch reads MEELDRSRAF…WAPITDSNAR (296 aa). Positions 60, 157, and 176 each coordinate substrate. Residues 196–197 and 236–242 each bind ATP; these read SD and RGGMTAK. The segment at 297-717 is gamma-glutamyl phosphate reductase; the sequence is DMAVAARESS…YTHQDIPIQA (421 aa).

The protein in the N-terminal section; belongs to the glutamate 5-kinase family. In the C-terminal section; belongs to the gamma-glutamyl phosphate reductase family.

It catalyses the reaction L-glutamate + ATP = L-glutamyl 5-phosphate + ADP. It carries out the reaction L-glutamate 5-semialdehyde + phosphate + NADP(+) = L-glutamyl 5-phosphate + NADPH + H(+). The protein operates within amino-acid biosynthesis; L-proline biosynthesis; L-glutamate 5-semialdehyde from L-glutamate: step 1/2. Its pathway is amino-acid biosynthesis; L-proline biosynthesis; L-glutamate 5-semialdehyde from L-glutamate: step 2/2. Functionally, P5CS plays a key role in proline biosynthesis, leading to osmoregulation in plants. The chain is Delta-1-pyrroline-5-carboxylate synthase A (P5CSA) from Arabidopsis thaliana (Mouse-ear cress).